Reading from the N-terminus, the 394-residue chain is Elongation factor Tu (394 aa).

The 195-residue stretch at 10 to 204 folds into the tr-type G domain; it reads KPHINVGTIG…FLDSYIPEPK (195 aa). Residues 19-26 are G1; it reads GHVDHGKT. Residue 19 to 26 participates in GTP binding; sequence GHVDHGKT. Thr26 serves as a coordination point for Mg(2+). The G2 stretch occupies residues 60–64; it reads GITIN. The tract at residues 81-84 is G3; that stretch reads DCPG. Residues 81 to 85 and 136 to 139 each bind GTP; these read DCPGH and NKCD. The interval 136–139 is G4; it reads NKCD. The segment at 174 to 176 is G5; that stretch reads SAL.

The protein belongs to the TRAFAC class translation factor GTPase superfamily. Classic translation factor GTPase family. EF-Tu/EF-1A subfamily. In terms of assembly, monomer.

Its subcellular location is the cytoplasm. It catalyses the reaction GTP + H2O = GDP + phosphate + H(+). GTP hydrolase that promotes the GTP-dependent binding of aminoacyl-tRNA to the A-site of ribosomes during protein biosynthesis. The polypeptide is Elongation factor Tu (Buchnera aphidicola subsp. Acyrthosiphon pisum (strain 5A)).